Reading from the N-terminus, the 282-residue chain is Elongation factor Ts (282 aa).

Positions 80–83 are involved in Mg(2+) ion dislocation from EF-Tu; it reads TDFV.

It belongs to the EF-Ts family.

The protein resides in the cytoplasm. Associates with the EF-Tu.GDP complex and induces the exchange of GDP to GTP. It remains bound to the aminoacyl-tRNA.EF-Tu.GTP complex up to the GTP hydrolysis stage on the ribosome. This is Elongation factor Ts (tsf) from Pasteurella multocida (strain Pm70).